A 180-amino-acid chain; its full sequence is Translation initiation factor IF-3 (180 aa).

It belongs to the IF-3 family. Monomer.

The protein localises to the cytoplasm. In terms of biological role, IF-3 binds to the 30S ribosomal subunit and shifts the equilibrium between 70S ribosomes and their 50S and 30S subunits in favor of the free subunits, thus enhancing the availability of 30S subunits on which protein synthesis initiation begins. The sequence is that of Translation initiation factor IF-3 from Shewanella baltica (strain OS223).